A 236-amino-acid chain; its full sequence is Serine/arginine-rich SC35-like splicing factor SCL28 (236 aa).

2 disordered regions span residues 1-53 (MARA…LIRN) and 124-219 (EENR…RVLT). Residues 14–43 (RPRDRSPPRERKGYDDNRLRERPSSRDHES) show a composition bias toward basic and acidic residues. An RRM domain is found at 47-125 (SGLLIRNLPL…REIAIVFAEE (79 aa)). Positions 149-176 (TSHRSPRRRYRSHSRSRSPPRRESRHSK) are enriched in basic residues. Position 184 is a phosphoserine (S184). The span at 199-217 (RNEREYKSRNCRSPREERV) shows a compositional bias: basic and acidic residues.

It belongs to the splicing factor SR family. SCL subfamily. In terms of assembly, component of the spliceosome. Interacts with RS2Z33, CYP59, CYP63 and CYP95.

It localises to the nucleus speckle. Functionally, involved in intron recognition and spliceosome assembly. Probably active at the 5' splice sites. This Arabidopsis thaliana (Mouse-ear cress) protein is Serine/arginine-rich SC35-like splicing factor SCL28 (SCL28).